A 545-amino-acid chain; its full sequence is Eukaryotic translation initiation factor 3 subunit D-2 (545 aa).

Residues 99–113 are compositionally biased toward basic residues; that stretch reads FRGNIRNNPRTRGRT. A disordered region spans residues 99 to 158; it reads FRGNIRNNPRTRGRTGRGGAVTGIGGNQPGVGVNERTKYGKGRDNRRQMGRRFGRNAPTR. Over residues 114-127 the composition is skewed to gly residues; that stretch reads GRGGAVTGIGGNQP. The segment covering 133–145 has biased composition (basic and acidic residues); sequence ERTKYGKGRDNRR. Residues 287–301 form an RNA gate region; that stretch reads QFDLLTVNETALEPP.

The protein belongs to the eIF-3 subunit D family. As to quaternary structure, component of the eukaryotic translation initiation factor 3 (eIF-3) complex. The eIF-3 complex interacts with pix.

It is found in the cytoplasm. In terms of biological role, mRNA cap-binding component of the eukaryotic translation initiation factor 3 (eIF-3) complex, which is involved in protein synthesis of a specialized repertoire of mRNAs and, together with other initiation factors, stimulates binding of mRNA and methionyl-tRNAi to the 40S ribosome. The eIF-3 complex specifically targets and initiates translation of a subset of mRNAs involved in cell proliferation. In the eIF-3 complex, eif3d specifically recognizes and binds the 7-methylguanosine cap of a subset of mRNAs. The sequence is that of Eukaryotic translation initiation factor 3 subunit D-2 from Drosophila persimilis (Fruit fly).